The following is a 192-amino-acid chain: Phosphoheptose isomerase (192 aa).

The 158-residue stretch at 35–192 folds into the SIS domain; sequence LIETLENQGK…CIERHFANKN (158 aa). A substrate-binding site is contributed by 50–52; sequence NGG. Positions 59 and 63 each coordinate Zn(2+). Substrate-binding positions include Glu-63, 92 to 93, 118 to 120, Ser-123, and Gln-170; these read ND and STS. Residues Gln-170 and His-178 each coordinate Zn(2+).

This sequence belongs to the SIS family. GmhA subfamily. In terms of assembly, homotetramer. The cofactor is Zn(2+).

Its subcellular location is the cytoplasm. The catalysed reaction is 2 D-sedoheptulose 7-phosphate = D-glycero-alpha-D-manno-heptose 7-phosphate + D-glycero-beta-D-manno-heptose 7-phosphate. It functions in the pathway carbohydrate biosynthesis; D-glycero-D-manno-heptose 7-phosphate biosynthesis; D-glycero-alpha-D-manno-heptose 7-phosphate and D-glycero-beta-D-manno-heptose 7-phosphate from sedoheptulose 7-phosphate: step 1/1. In terms of biological role, catalyzes the isomerization of sedoheptulose 7-phosphate in D-glycero-D-manno-heptose 7-phosphate. The chain is Phosphoheptose isomerase from Helicobacter pylori (strain Shi470).